Here is a 204-residue protein sequence, read N- to C-terminus: Protein G1-like5 (204 aa).

Disordered regions lie at residues 1 to 45 (MEFV…ESQK) and 157 to 204 (RARG…GAAA). Residues 26–39 (TGATSASAAGASPS) are compositionally biased toward low complexity. An ALOG domain is found at 40-167 (RYESQKRRDW…ARGVSYEKKK (128 aa)). The short motif at 165-169 (KKKRK) is the Nuclear localization signal element.

This sequence belongs to the plant homeotic and developmental regulators ALOG protein family.

Its subcellular location is the nucleus. In terms of biological role, probable transcription regulator that acts as a developmental regulator by promoting cell growth in response to light. In Oryza sativa subsp. japonica (Rice), this protein is Protein G1-like5 (G1L5).